Here is a 764-residue protein sequence, read N- to C-terminus: Ribosomal protein S6 kinase alpha-6 (764 aa).

The disordered stretch occupies residues 1–24; that stretch reads MLPFAPVEDPWDQEDMEVFGSTSS. Residues 93-350 enclose the Protein kinase 1 domain; sequence FDLLKVLGQG…VEEVKRHAFF (258 aa). Residues 99 to 107 and K125 each bind ATP; that span reads LGQGSFGKV. Catalysis depends on D218, which acts as the Proton acceptor. A phosphoserine mark is found at S252, S392, and S409. The AGC-kinase C-terminal domain occupies 351-420; sequence ASIDWNKLYK…VATSIAEEYK (70 aa). The 261-residue stretch at 446-706 folds into the Protein kinase 2 domain; the sequence is YELKEDIGIG…VLKHPWITQR (261 aa). Residues 452–460 and K475 each bind ATP; that span reads IGIGSYSVC. The active-site Proton acceptor is the D563. T601 carries the post-translational modification Phosphothreonine.

This sequence belongs to the protein kinase superfamily. AGC Ser/Thr protein kinase family. S6 kinase subfamily. In terms of assembly, forms a complex with MAPK3/ERK1 but not with MAPK9 or MAPK14 in serum-starved cells. Mg(2+) is required as a cofactor. Post-translationally, phosphorylated at Ser-252, Ser-392, and Ser-409 in serum-starved cells.

The protein localises to the cytoplasm. It is found in the cytosol. Its subcellular location is the nucleus. The catalysed reaction is L-seryl-[protein] + ATP = O-phospho-L-seryl-[protein] + ADP + H(+). It carries out the reaction L-threonyl-[protein] + ATP = O-phospho-L-threonyl-[protein] + ADP + H(+). Constitutively activated by phosphorylation at Ser-252, Ser-392, and Ser-409 in serum-starved cells. Does not require growth factor stimulation for significant kinase activity. In terms of biological role, constitutively active serine/threonine-protein kinase that exhibits growth-factor-independent kinase activity and that may participate in p53/TP53-dependent cell growth arrest signaling and play an inhibitory role during embryogenesis. This is Ribosomal protein S6 kinase alpha-6 (Rps6ka6) from Mus musculus (Mouse).